Consider the following 946-residue polypeptide: Bifunctional glutamine synthetase adenylyltransferase/adenylyl-removing enzyme (946 aa).

Residues 1–440 (MKPLSSPLQQ…VFNELIGDDE (440 aa)) are adenylyl removase. The adenylyl transferase stretch occupies residues 449 to 946 (SEQWRELWQD…ASWQKWLVEE (498 aa)).

Belongs to the GlnE family. Requires Mg(2+) as cofactor.

The enzyme catalyses [glutamine synthetase]-O(4)-(5'-adenylyl)-L-tyrosine + phosphate = [glutamine synthetase]-L-tyrosine + ADP. It carries out the reaction [glutamine synthetase]-L-tyrosine + ATP = [glutamine synthetase]-O(4)-(5'-adenylyl)-L-tyrosine + diphosphate. Involved in the regulation of glutamine synthetase GlnA, a key enzyme in the process to assimilate ammonia. When cellular nitrogen levels are high, the C-terminal adenylyl transferase (AT) inactivates GlnA by covalent transfer of an adenylyl group from ATP to specific tyrosine residue of GlnA, thus reducing its activity. Conversely, when nitrogen levels are low, the N-terminal adenylyl removase (AR) activates GlnA by removing the adenylyl group by phosphorolysis, increasing its activity. The regulatory region of GlnE binds the signal transduction protein PII (GlnB) which indicates the nitrogen status of the cell. This chain is Bifunctional glutamine synthetase adenylyltransferase/adenylyl-removing enzyme, found in Shigella boydii serotype 4 (strain Sb227).